The primary structure comprises 937 residues: CAP-Gly domain-containing linker protein 1 homolog (937 aa).

Positions 39-81 constitute a CAP-Gly domain; sequence GPIHGKDGMFCGIELLEPNGKHDGTFQGVSYFIATPYHGIFAP. Disordered stretches follow at residues 90-131 and 264-548; these read EELP…VMST and LPND…SRLQ. Over residues 268–281 the composition is skewed to polar residues; that stretch reads LNANFSNKNSTTTF. The segment covering 285 to 295 has biased composition (basic and acidic residues); the sequence is ETPKVEIRENG. Polar residues predominate over residues 296-309; sequence NLDNSIETPPQQSP. Composition is skewed to basic and acidic residues over residues 317 to 353, 383 to 396, 409 to 424, and 463 to 473; these read HESD…KEEP, IEAE…EIKS, PQKE…ETPR, and AKERVEKEKKI. Residues 492–501 show a composition bias toward low complexity; the sequence is SSIPSTSSAS. 2 coiled-coil regions span residues 566 to 740 and 773 to 800; these read EDNE…VDEI and QQIE…DLMQ. Disordered stretches follow at residues 819-866 and 916-937; these read MESR…DSMN and PTIK…GLVM. A compositionally biased stretch (low complexity) spans 832 to 844; that stretch reads RSRSSASGSRPIS. Residues 845 to 858 are compositionally biased toward polar residues; sequence MATSNGGDQRLSTS.

The sequence is that of CAP-Gly domain-containing linker protein 1 homolog from Caenorhabditis elegans.